Here is a 573-residue protein sequence, read N- to C-terminus: Estrogen receptor beta (573 aa).

Residues 15–170 (QEVDSSKVGE…CFAGKGDMHF (156 aa)) form a modulating region. 2 consecutive NR C4-type zinc fingers follow at residues 171–191 (CAVC…CEGC) and 207–231 (CPAT…LRKC). A DNA-binding region (nuclear receptor) is located at residues 171 to 236 (CAVCHDYASG…RLRKCYEVGM (66 aa)). One can recognise an NR LBD domain in the interval 291-527 (TPEQLINRII…DLLLEMLDAN (237 aa)). 2 stretches are compositionally biased toward low complexity: residues 534 to 552 (MSAS…AQSQ) and 559 to 573 (CSGE…SSTI). The disordered stretch occupies residues 534–573 (MSASYSSQPSPWSQAAQSQPGPPPSCSGECPCPPKESSTI).

The protein belongs to the nuclear hormone receptor family. NR3 subfamily. Binds DNA as a homodimer. Can form a heterodimer with ER-alpha. In terms of tissue distribution, liver.

It is found in the nucleus. Functionally, binds estrogens with an affinity similar to that of ER-alpha, and activates expression of reporter genes containing estrogen response elements (ERE) in an estrogen-dependent manner. In Anguilla japonica (Japanese eel), this protein is Estrogen receptor beta (esr2).